A 206-amino-acid chain; its full sequence is Pyridoxine/pyridoxamine 5'-phosphate oxidase (206 aa).

Residues 53–58, 68–69, Lys75, and Gln97 each bind FMN; these read RMVLLK and YT. Lys58 serves as a coordination point for substrate. Substrate is bound by residues Tyr115, Arg119, and Ser123. FMN-binding positions include 132–133 and Trp177; that span reads QS. 183 to 185 is a substrate binding site; that stretch reads RLH. Arg187 is a binding site for FMN.

It belongs to the pyridoxamine 5'-phosphate oxidase family. In terms of assembly, homodimer. FMN is required as a cofactor.

The enzyme catalyses pyridoxamine 5'-phosphate + O2 + H2O = pyridoxal 5'-phosphate + H2O2 + NH4(+). The catalysed reaction is pyridoxine 5'-phosphate + O2 = pyridoxal 5'-phosphate + H2O2. Its pathway is cofactor metabolism; pyridoxal 5'-phosphate salvage; pyridoxal 5'-phosphate from pyridoxamine 5'-phosphate: step 1/1. The protein operates within cofactor metabolism; pyridoxal 5'-phosphate salvage; pyridoxal 5'-phosphate from pyridoxine 5'-phosphate: step 1/1. In terms of biological role, catalyzes the oxidation of either pyridoxine 5'-phosphate (PNP) or pyridoxamine 5'-phosphate (PMP) into pyridoxal 5'-phosphate (PLP). This is Pyridoxine/pyridoxamine 5'-phosphate oxidase from Rhizobium leguminosarum bv. trifolii (strain WSM2304).